Reading from the N-terminus, the 187-residue chain is Biogenesis of lysosome-related organelles complex 1 subunit 5 (187 aa).

Residues 1–26 are disordered; that stretch reads MSGGGTETPVGCEAAPGGGSKKRDSL. N-acetylserine is present on Ser2. Residues 154–186 adopt a coiled-coil conformation; that stretch reads NKRAEVDEEHRKAMERLKEQYAEMEKDLAKFST.

The protein belongs to the BLOC1S5 family. In terms of assembly, interacts with BLOC1S4, DTNBP1/BLOC1S7 and PI4K2A. Component of the biogenesis of lysosome-related organelles complex 1 (BLOC-1) composed of BLOC1S1, BLOC1S2, BLOC1S3, BLOC1S4, BLOC1S5, BLOC1S6, DTNBP1/BLOC1S7 and SNAPIN/BLOC1S8. Octamer composed of one copy each BLOC1S1, BLOC1S2, BLOC1S3, BLOC1S4, BLOC1S5, BLOC1S6, DTNBP1/BLOC1S7 and SNAPIN/BLOC1S8. The BLOC-1 complex associates with the AP-3 protein complex and membrane protein cargos. Interacts with BLOC1S6.

In terms of biological role, component of the BLOC-1 complex, a complex that is required for normal biogenesis of lysosome-related organelles (LRO), such as platelet dense granules and melanosomes. In concert with the AP-3 complex, the BLOC-1 complex is required to target membrane protein cargos into vesicles assembled at cell bodies for delivery into neurites and nerve terminals. The BLOC-1 complex, in association with SNARE proteins, is also proposed to be involved in neurite extension. Plays a role in intracellular vesicle trafficking. The protein is Biogenesis of lysosome-related organelles complex 1 subunit 5 of Homo sapiens (Human).